The chain runs to 97 residues: Aspartyl/glutamyl-tRNA(Asn/Gln) amidotransferase subunit C (97 aa).

The protein belongs to the GatC family. As to quaternary structure, heterotrimer of A, B and C subunits.

It carries out the reaction L-glutamyl-tRNA(Gln) + L-glutamine + ATP + H2O = L-glutaminyl-tRNA(Gln) + L-glutamate + ADP + phosphate + H(+). It catalyses the reaction L-aspartyl-tRNA(Asn) + L-glutamine + ATP + H2O = L-asparaginyl-tRNA(Asn) + L-glutamate + ADP + phosphate + 2 H(+). Functionally, allows the formation of correctly charged Asn-tRNA(Asn) or Gln-tRNA(Gln) through the transamidation of misacylated Asp-tRNA(Asn) or Glu-tRNA(Gln) in organisms which lack either or both of asparaginyl-tRNA or glutaminyl-tRNA synthetases. The reaction takes place in the presence of glutamine and ATP through an activated phospho-Asp-tRNA(Asn) or phospho-Glu-tRNA(Gln). The polypeptide is Aspartyl/glutamyl-tRNA(Asn/Gln) amidotransferase subunit C (Anaeromyxobacter dehalogenans (strain 2CP-C)).